We begin with the raw amino-acid sequence, 179 residues long: Peptide deformylase (179 aa).

C102 and H144 together coordinate Fe cation. E145 is a catalytic residue. H148 is a binding site for Fe cation.

The protein belongs to the polypeptide deformylase family. The cofactor is Fe(2+).

It catalyses the reaction N-terminal N-formyl-L-methionyl-[peptide] + H2O = N-terminal L-methionyl-[peptide] + formate. In terms of biological role, removes the formyl group from the N-terminal Met of newly synthesized proteins. Requires at least a dipeptide for an efficient rate of reaction. N-terminal L-methionine is a prerequisite for activity but the enzyme has broad specificity at other positions. This is Peptide deformylase from Wolbachia pipientis wMel.